A 603-amino-acid polypeptide reads, in one-letter code: Elongation factor 4 (603 aa).

The 183-residue stretch at 7 to 189 (SRIRNFSIIA…AIVQQVPPPA (183 aa)) folds into the tr-type G domain. GTP-binding positions include 19 to 24 (DHGKST) and 136 to 139 (NKID).

This sequence belongs to the TRAFAC class translation factor GTPase superfamily. Classic translation factor GTPase family. LepA subfamily.

It is found in the cell inner membrane. It carries out the reaction GTP + H2O = GDP + phosphate + H(+). In terms of biological role, required for accurate and efficient protein synthesis under certain stress conditions. May act as a fidelity factor of the translation reaction, by catalyzing a one-codon backward translocation of tRNAs on improperly translocated ribosomes. Back-translocation proceeds from a post-translocation (POST) complex to a pre-translocation (PRE) complex, thus giving elongation factor G a second chance to translocate the tRNAs correctly. Binds to ribosomes in a GTP-dependent manner. This chain is Elongation factor 4, found in Synechocystis sp. (strain ATCC 27184 / PCC 6803 / Kazusa).